Reading from the N-terminus, the 672-residue chain is DNA ligase (672 aa).

Residues 32–36 (DAEYD), 81–82 (SL), and E113 each bind NAD(+). The N6-AMP-lysine intermediate role is filled by K115. NAD(+) is bound by residues R136, E173, K290, and K314. Zn(2+) contacts are provided by C408, C411, C426, and C432. One can recognise a BRCT domain in the interval 594 to 672 (EIDSPFAGKT…EAEMLRLLGE (79 aa)).

It belongs to the NAD-dependent DNA ligase family. LigA subfamily. Mg(2+) is required as a cofactor. Mn(2+) serves as cofactor.

It catalyses the reaction NAD(+) + (deoxyribonucleotide)n-3'-hydroxyl + 5'-phospho-(deoxyribonucleotide)m = (deoxyribonucleotide)n+m + AMP + beta-nicotinamide D-nucleotide.. Functionally, DNA ligase that catalyzes the formation of phosphodiester linkages between 5'-phosphoryl and 3'-hydroxyl groups in double-stranded DNA using NAD as a coenzyme and as the energy source for the reaction. It is essential for DNA replication and repair of damaged DNA. This chain is DNA ligase, found in Cronobacter sakazakii (strain ATCC BAA-894) (Enterobacter sakazakii).